A 427-amino-acid chain; its full sequence is MEYKRSSHVEEEEEEEEEEDDEEEDEEEQGHHQYTTAAAQQQLHPQVLGSSASSPSSLMDSAAFSRPLLPPNLSLVSPSAAAAAAPGGSYLHAAHHHGQGRRVEAPGGESQHHLQRHHEPARNGVLGGVAGAHAASTLALVGGGGGGPRGGEGAAGEAPTWRYRECLKNHAARMGAHVLDGCGEFMSSPGDGAAALACAACGCHRSFHRREPAVVAPASLSLCPASASASAAAGLVSLSPSATPTGANSSRLMPLLLAPPHMQKRPPVLPVSPASAPAALAESSSEELRPPPLPSSHPHAHAAAVVAASASAPPGPSKKRFRTKFTAEQKERMREFAHRVGWRIHKPDAAAVDAFCAQVGVSRRVLKVWMHNNKHLAKTPPSPTSQPPPPPLHHDPSPPPPPHHHHHHHHHHHPPQHHQQQQQQHDA.

Disordered stretches follow at residues 1–60 (MEYK…SLMD) and 91–118 (LHAAHHHGQGRRVEAPGGESQHHLQRHH). Positions 10–28 (EEEEEEEEEEDDEEEDEEE) are enriched in acidic residues. Residues 50 to 60 (SSASSPSSLMD) show a composition bias toward low complexity. The ZF-HD dimerization-type; degenerate zinc-finger motif lies at 163–211 (YRECLKNHAARMGAHVLDGCGEFMSSPGDGAAALACAACGCHRSFHRRE). 2 disordered regions span residues 264–320 (KRPP…SKKR) and 375–427 (HLAK…QHDA). Low complexity-rich tracts occupy residues 271 to 283 (VSPASAPAALAES) and 301 to 312 (HAAAVVAASASA). Residues 318–381 (KKRFRTKFTA…NNKHLAKTPP (64 aa)) constitute a DNA-binding region (homeobox). The segment covering 380–401 (PPSPTSQPPPPPLHHDPSPPPP) has biased composition (pro residues). Residues 402-416 (PHHHHHHHHHHHPPQ) show a composition bias toward basic residues. Positions 417–427 (HHQQQQQQHDA) are enriched in low complexity.

Homo- and heterodimer with other ZFHD proteins.

It localises to the nucleus. Its function is as follows. Putative transcription factor. This Oryza sativa subsp. japonica (Rice) protein is Zinc-finger homeodomain protein 7 (ZHD7).